The chain runs to 350 residues: Outer membrane protein A (350 aa).

The N-terminal stretch at 1-21 (MKKTAIAIAVALAGFATVAQA) is a signal peptide. The next 8 beta stranded transmembrane spans lie at 27-37 (TWYAGAKLGWS), 55-66 (QLGAGAFGGYQV), 70-78 (VGFEMGYDW), 96-107 (QGVQLTAKLGYP), 112-120 (LDVYTRLGG), 146-155 (PVFAGGIEYA), 160-167 (IATRLEYQ), and 186-194 (LLSVGVSYR). Tandem repeats lie at residues 205–206 (AP), 207–208 (AP), 209–210 (AP), and 211–212 (AP). Residues 205-212 (APAPAPAP) are 4 X 2 AA tandem repeats of A-P. An OmpA-like domain is found at 214-342 (VQTKHFTLKS…RVEIEVKGVK (129 aa)). Cys-315 and Cys-327 are oxidised to a cystine.

This sequence belongs to the outer membrane OOP (TC 1.B.6) superfamily. OmpA family. Monomer and homodimer.

The protein resides in the cell outer membrane. In terms of biological role, with TolR probably plays a role in maintaining the position of the peptidoglycan cell wall in the periplasm. Acts as a porin with low permeability that allows slow penetration of small solutes; an internal gate slows down solute passage. Its function is as follows. Required for conjugation with F-type plasmids; probably serves as the mating receptor on recipient cells. The protein is Outer membrane protein A of Salmonella typhi.